The sequence spans 283 residues: MVVLDSVSTLRESIQKWRKAGLTIGFVPTMGNLHAGHLSLVKQARQKSDKVIVSIFVNPLQFGPDEDYDRYPRTFEADKALLQQHNADAVFCPSVDEMYPNGQAQTRVIAPEKMTSILEGAKRPGHFDGVTTVVAKLFNMVQPDIAILGQKDFQQFAVLQQMVEDLALSVELIRAPIVRDETGLALSSRNQYLTEIQRSVAPKLFVALQSIEMAIRSGNKNYSSLCQIATQQVLSDGFDAVDYIQVLNASSLEEPQQGDQALVIVAAAKLGQTRLLDNVLVSL.

Methionine 30–histidine 37 contacts ATP. The Proton donor role is filled by histidine 37. Glutamine 61 contacts (R)-pantoate. Position 61 (glutamine 61) interacts with beta-alanine. Glycine 149–aspartate 152 lines the ATP pocket. Residue glutamine 155 coordinates (R)-pantoate. Residues valine 178 and leucine 186–arginine 189 each bind ATP.

It belongs to the pantothenate synthetase family. As to quaternary structure, homodimer.

It is found in the cytoplasm. It catalyses the reaction (R)-pantoate + beta-alanine + ATP = (R)-pantothenate + AMP + diphosphate + H(+). Its pathway is cofactor biosynthesis; (R)-pantothenate biosynthesis; (R)-pantothenate from (R)-pantoate and beta-alanine: step 1/1. Its function is as follows. Catalyzes the condensation of pantoate with beta-alanine in an ATP-dependent reaction via a pantoyl-adenylate intermediate. The chain is Pantothenate synthetase from Hydrogenovibrio crunogenus (strain DSM 25203 / XCL-2) (Thiomicrospira crunogena).